A 706-amino-acid polypeptide reads, in one-letter code: Signal transducer and activator of transcription 1 (706 aa).

One can recognise an SH2 domain in the interval 477–574 (WCIGFISKND…EEMLRFFESE (98 aa)).

It belongs to the transcription factor STAT family. As to quaternary structure, forms a homodimer or a heterodimer with a related family member. Expressed in adult and larval pharynx, head ganglia, tail ganglia, ventral nerve cord and body muscles.

Its subcellular location is the cytoplasm. It localises to the nucleus. Functionally, carries out a dual function: signal transduction and activation of transcription. Activated STAT proteins play a role in repression of dauer formation. Neuronal expression is held in check by negative signals through the TGF-beta pathway that target the daf-3 transcription factor. This is Signal transducer and activator of transcription 1 from Caenorhabditis elegans.